The following is a 133-amino-acid chain: Phosphoribosyl-AMP cyclohydrolase (133 aa).

Residue Asp-77 coordinates Mg(2+). Cys-78 contacts Zn(2+). Residues Asp-79 and Asp-81 each coordinate Mg(2+). Residues Cys-95 and Cys-102 each coordinate Zn(2+).

This sequence belongs to the PRA-CH family. Homodimer. The cofactor is Mg(2+). Zn(2+) is required as a cofactor.

Its subcellular location is the cytoplasm. It carries out the reaction 1-(5-phospho-beta-D-ribosyl)-5'-AMP + H2O = 1-(5-phospho-beta-D-ribosyl)-5-[(5-phospho-beta-D-ribosylamino)methylideneamino]imidazole-4-carboxamide. The protein operates within amino-acid biosynthesis; L-histidine biosynthesis; L-histidine from 5-phospho-alpha-D-ribose 1-diphosphate: step 3/9. Its function is as follows. Catalyzes the hydrolysis of the adenine ring of phosphoribosyl-AMP. The protein is Phosphoribosyl-AMP cyclohydrolase of Azotobacter vinelandii (strain DJ / ATCC BAA-1303).